The sequence spans 341 residues: Galactofuranose transporter permease protein YtfT (341 aa).

Residues 1 to 25 lie on the Cytoplasmic side of the membrane; the sequence is MMPQSLPDTTTPKRRFRWPTGMPQL. The chain crosses the membrane as a helical span at residues 26 to 46; sequence VALLLVLLVDSLVAPHFWQVV. The Periplasmic portion of the chain corresponds to 47-65; sequence LQDGRLFGSPIDILNRAAP. A run of 2 helical transmembrane segments spans residues 66–86 and 87–107; these read VALL…DLSV and GAVM…GFSL. A topological domain (periplasmic) is located at residue proline 108. The chain crosses the membrane as a helical span at residues 109 to 129; the sequence is IVLLSALGTGILAGLWNGILV. The Cytoplasmic portion of the chain corresponds to 130–136; that stretch reads AILKIQP. A helical membrane pass occupies residues 137 to 157; it reads FVATLILMVAGRGVAQLITAG. Residues 158-174 lie on the Periplasmic side of the membrane; that stretch reads QIVTFNSPDLSWFGSGS. The chain crosses the membrane as a helical span at residues 175 to 195; it reads LLFLPTPVIIAVLTLILFWLL. The Cytoplasmic segment spans residues 196–223; it reads TRKTALGMFIEAVGINIRAAKNAGVNTR. A helical membrane pass occupies residues 224 to 244; it reads IIVMLTYVLSGLCAAIAGIIV. Topologically, residues 245-255 are periplasmic; it reads AADIRGADANN. The helical transmembrane segment at 256–276 threads the bilayer; that stretch reads AGLWLELDAILAVVIGGGSLM. Over 277 to 281 the chain is Cytoplasmic; that stretch reads GGRFN. Helical transmembrane passes span 282–302 and 303–323; these read LLLS…ILLS and GFPP…VLIV. Residues 324–341 are Cytoplasmic-facing; that stretch reads QSQRFISLIKGVRSRDKT.

It belongs to the binding-protein-dependent transport system permease family. AraH/RbsC subfamily. As to quaternary structure, the complex is composed of two ATP-binding proteins (YtfR), two transmembrane proteins (YtfT and YjfF) and a solute-binding protein (YtfQ).

It is found in the cell inner membrane. In terms of biological role, part of the ABC transporter complex YtfQRT-YjfF involved in galactofuranose transport. Probably responsible for the translocation of the substrate across the membrane. This Escherichia coli (strain K12) protein is Galactofuranose transporter permease protein YtfT (ytfT).